The following is a 336-amino-acid chain: Coproporphyrin III ferrochelatase (336 aa).

Fe-coproporphyrin III contacts are provided by Ser-52 and Tyr-116. Fe(2+)-binding residues include His-176 and Glu-259.

The protein belongs to the ferrochelatase family.

The protein resides in the cytoplasm. The catalysed reaction is Fe-coproporphyrin III + 2 H(+) = coproporphyrin III + Fe(2+). The protein operates within porphyrin-containing compound metabolism; protoheme biosynthesis. In terms of biological role, involved in coproporphyrin-dependent heme b biosynthesis. Catalyzes the insertion of ferrous iron into coproporphyrin III to form Fe-coproporphyrin III. This Mycobacterium leprae (strain Br4923) protein is Coproporphyrin III ferrochelatase.